We begin with the raw amino-acid sequence, 445 residues long: MATAASNHYSLLTSSASIVHAEPPGGMQQGAGGYREAQSLVQGDYGALQSNGHPLSHAHQWITALSHGGGGGGGGGGGGGGGGGGGGGDGSPWSTSPLGQPDIKPSVVVQQGGRGDELHGPGALQQQHQQQQQQQQQQQQQQQQQQQQQQQRPPHLVHHAANHHPGPGAWRSAAAAAHLPPSMGASNGGLLYSQPSFTVNGMLGAGGQPAGLHHHGLRDAHDEPHHADHHPHPHSHPHQQPPPPPPPQGPPGHPGAHHDPHSDEDTPTSDDLEQFAKQFKQRRIKLGFTQADVGLALGTLYGNVFSQTTICRFEALQLSFKNMCKLKPLLNKWLEEADSSSGSPTSIDKIAAQGRKRKKRTSIEVSVKGALESHFLKCPKPSAQEITSLADSLQLEKEVVRVWFCNRRQKEKRMTPPGGTLPGAEDVYGGSRDTPPHHGVQTPVQ.

Disordered regions lie at residues 64–173 and 203–269; these read ALSH…WRSA and LGAG…TPTS. Residues 67–90 are compositionally biased toward gly residues; the sequence is HGGGGGGGGGGGGGGGGGGGGGDG. Composition is skewed to low complexity over residues 125–151 and 163–173; these read QQQH…QQQQ and HHPGPGAWRSA. The segment covering 217–226 has biased composition (basic and acidic residues); that stretch reads LRDAHDEPHH. Over residues 227-237 the composition is skewed to basic residues; it reads ADHHPHPHSHP. The span at 239-253 shows a compositional bias: pro residues; it reads QQPPPPPPPQGPPGH. The region spanning 264 to 338 is the POU-specific domain; the sequence is EDTPTSDDLE…LLNKWLEEAD (75 aa). Serine 343 bears the Phosphoserine mark. The homeobox DNA-binding region spans 356–415; it reads KRKKRTSIEVSVKGALESHFLKCPKPSAQEITSLADSLQLEKEVVRVWFCNRRQKEKRMT. The interval 411–445 is disordered; sequence EKRMTPPGGTLPGAEDVYGGSRDTPPHHGVQTPVQ.

It belongs to the POU transcription factor family. Class-3 subfamily. As to quaternary structure, interacts with PQBP1. Interaction with ISL1. Expressed specifically in the neuroectodermal cell lineage.

Its subcellular location is the nucleus. In terms of biological role, transcription factor that plays a key role in neuronal differentiation. Binds preferentially to the recognition sequence which consists of two distinct half-sites, ('GCAT') and ('TAAT'), separated by a non-conserved spacer region of 0, 2, or 3 nucleotides. Acts as a transcriptional activator when binding cooperatively with SOX4, SOX11, or SOX12 to gene promoters. The combination of three transcription factors, ASCL1, POU3F2/BRN2 and MYT1L, is sufficient to reprogram fibroblasts and other somatic cells into induced neuronal (iN) cells in vitro. Acts downstream of ASCL1, accessing chromatin that has been opened by ASCL1, and promotes transcription of neuronal genes. This is POU domain, class 3, transcription factor 2 (Pou3f2) from Mus musculus (Mouse).